We begin with the raw amino-acid sequence, 94 residues long: Pyrimidine/purine nucleoside phosphorylase (94 aa).

Belongs to the nucleoside phosphorylase PpnP family.

The enzyme catalyses a purine D-ribonucleoside + phosphate = a purine nucleobase + alpha-D-ribose 1-phosphate. It catalyses the reaction adenosine + phosphate = alpha-D-ribose 1-phosphate + adenine. It carries out the reaction cytidine + phosphate = cytosine + alpha-D-ribose 1-phosphate. The catalysed reaction is guanosine + phosphate = alpha-D-ribose 1-phosphate + guanine. The enzyme catalyses inosine + phosphate = alpha-D-ribose 1-phosphate + hypoxanthine. It catalyses the reaction thymidine + phosphate = 2-deoxy-alpha-D-ribose 1-phosphate + thymine. It carries out the reaction uridine + phosphate = alpha-D-ribose 1-phosphate + uracil. The catalysed reaction is xanthosine + phosphate = alpha-D-ribose 1-phosphate + xanthine. Functionally, catalyzes the phosphorolysis of diverse nucleosides, yielding D-ribose 1-phosphate and the respective free bases. Can use uridine, adenosine, guanosine, cytidine, thymidine, inosine and xanthosine as substrates. Also catalyzes the reverse reactions. In Pectobacterium carotovorum subsp. carotovorum (strain PC1), this protein is Pyrimidine/purine nucleoside phosphorylase.